Reading from the N-terminus, the 227-residue chain is Cytochrome c oxidase subunit 2 (227 aa).

Residues 1-14 (MAHAAQVGLQDATS) are Mitochondrial intermembrane-facing. The chain crosses the membrane as a helical span at residues 15-45 (PIMEELIIFHDHALMIIFLICFLVLYALFLT). Topologically, residues 46-59 (LTTKLTNTSISDAQ) are mitochondrial matrix. The helical transmembrane segment at 60 to 87 (EMETVWTILPAIILVLIALPSLRILYMT) threads the bilayer. The Mitochondrial intermembrane segment spans residues 88–227 (DEVNDPSFTI…IFEMGPVFTL (140 aa)). Histidine 161, cysteine 196, glutamate 198, cysteine 200, histidine 204, and methionine 207 together coordinate Cu cation. Residue glutamate 198 participates in Mg(2+) binding.

This sequence belongs to the cytochrome c oxidase subunit 2 family. Component of the cytochrome c oxidase (complex IV, CIV), a multisubunit enzyme composed of 14 subunits. The complex is composed of a catalytic core of 3 subunits MT-CO1, MT-CO2 and MT-CO3, encoded in the mitochondrial DNA, and 11 supernumerary subunits COX4I, COX5A, COX5B, COX6A, COX6B, COX6C, COX7A, COX7B, COX7C, COX8 and NDUFA4, which are encoded in the nuclear genome. The complex exists as a monomer or a dimer and forms supercomplexes (SCs) in the inner mitochondrial membrane with NADH-ubiquinone oxidoreductase (complex I, CI) and ubiquinol-cytochrome c oxidoreductase (cytochrome b-c1 complex, complex III, CIII), resulting in different assemblies (supercomplex SCI(1)III(2)IV(1) and megacomplex MCI(2)III(2)IV(2)). Found in a complex with TMEM177, COA6, COX18, COX20, SCO1 and SCO2. Interacts with TMEM177 in a COX20-dependent manner. Interacts with COX20. Interacts with COX16. Cu cation serves as cofactor.

It is found in the mitochondrion inner membrane. The catalysed reaction is 4 Fe(II)-[cytochrome c] + O2 + 8 H(+)(in) = 4 Fe(III)-[cytochrome c] + 2 H2O + 4 H(+)(out). Component of the cytochrome c oxidase, the last enzyme in the mitochondrial electron transport chain which drives oxidative phosphorylation. The respiratory chain contains 3 multisubunit complexes succinate dehydrogenase (complex II, CII), ubiquinol-cytochrome c oxidoreductase (cytochrome b-c1 complex, complex III, CIII) and cytochrome c oxidase (complex IV, CIV), that cooperate to transfer electrons derived from NADH and succinate to molecular oxygen, creating an electrochemical gradient over the inner membrane that drives transmembrane transport and the ATP synthase. Cytochrome c oxidase is the component of the respiratory chain that catalyzes the reduction of oxygen to water. Electrons originating from reduced cytochrome c in the intermembrane space (IMS) are transferred via the dinuclear copper A center (CU(A)) of subunit 2 and heme A of subunit 1 to the active site in subunit 1, a binuclear center (BNC) formed by heme A3 and copper B (CU(B)). The BNC reduces molecular oxygen to 2 water molecules using 4 electrons from cytochrome c in the IMS and 4 protons from the mitochondrial matrix. The sequence is that of Cytochrome c oxidase subunit 2 (MT-CO2) from Pan troglodytes (Chimpanzee).